The chain runs to 344 residues: Arginine N-succinyltransferase (344 aa).

L125 is a succinyl-CoA binding site. H229 functions as the Proton donor in the catalytic mechanism.

This sequence belongs to the arginine N-succinyltransferase family.

The catalysed reaction is succinyl-CoA + L-arginine = N(2)-succinyl-L-arginine + CoA + H(+). It functions in the pathway amino-acid degradation; L-arginine degradation via AST pathway; L-glutamate and succinate from L-arginine: step 1/5. Catalyzes the transfer of succinyl-CoA to arginine to produce N(2)-succinylarginine. This chain is Arginine N-succinyltransferase, found in Enterobacter sp. (strain 638).